A 240-amino-acid polypeptide reads, in one-letter code: MALEKSLETGDGQEKVRKQTAVYVYEAPLRLWHWVTALSIVVLGVTGYFIGAPLPTMPGEAMDNYLMGYIRFAHFAAGYVLAIGFLGRVYWAFVGNHHARELFLVPVHRKAWWKELWHEVRWYLFLEKTPKKYIGHNPLGQLAMFCFFVVGAVFMSVTGFALYAEGLGRDSWADRLFGWVIPLFGQSQDVHTWHHLGMWYLVVFVMVHVYLAVREDIVSRQSLISTMVGGWRMFKDDRPD.

4 helical membrane passes run 31-51, 75-95, 142-163, and 196-213; these read LWHW…YFIG, FAAG…AFVG, LAMF…FALY, and LGMW…YLAV.

Belongs to the HupC/HyaC/HydC family.

It is found in the cell membrane. In terms of biological role, probable b-type cytochrome. The sequence is that of Probable Ni/Fe-hydrogenase B-type cytochrome subunit (hoxZ) from Azotobacter vinelandii.